We begin with the raw amino-acid sequence, 334 residues long: L-lactate dehydrogenase B chain (334 aa).

Residues 30–58 and R100 each bind NAD(+); that span reads GQVGMACAVSILLRELTDEIALVDVLEDK. Positions 107, 139, and 170 each coordinate substrate. N139 is a binding site for NAD(+). The active-site Proton acceptor is the H194. T249 lines the substrate pocket.

This sequence belongs to the LDH/MDH superfamily. LDH family. Homotetramer.

It is found in the cytoplasm. The catalysed reaction is (S)-lactate + NAD(+) = pyruvate + NADH + H(+). Its pathway is fermentation; pyruvate fermentation to lactate; (S)-lactate from pyruvate: step 1/1. Interconverts simultaneously and stereospecifically pyruvate and lactate with concomitant interconversion of NADH and NAD(+). In Squalus acanthias (Spiny dogfish), this protein is L-lactate dehydrogenase B chain (ldhb).